A 552-amino-acid polypeptide reads, in one-letter code: MKLLSVLITFLLATVIYSQTNPATLTFTVQVYDQFPGYNNNFQTNGAGARVTGLIKSTLNSTTRVPELVSTATGGLNGVGLILNPSLFPYFFSPQQDSSLPGQNSPLSLDLVFTYDTTRNIYVYNNQNFFPIDNQGLDVDPAKRIYLNGATYHNYHFCMKMNTVFTYKGYEVFNFQGDDDVWVFINNKLVIDLGGVHGPLAASVDATTLGLTIGNSYNFDLFFCERQTVGSTIKIETNLLFVCPFEDYCGVCQGDGSSCCNPLTTCNDNNQCTIDSCPPANTTIGSGSISDYCIHTPKINTNPIDICFNYQCNSSTGNFDPIPIPCLDRSSECLSTIGCNSTVGCQYESICNSNVCNIQNQCSSNGTCVPKSSNDCGIELDGQVDKCKIYSCDSNGGVGCIKEDKCKPSEDKCHVVSCDSLTGSCITTPLEDPLAGLHLCSIARCNSSTGEFTYDPIICTPSSNPCISTQCNATNGQCYETQIPGDICDCGCGIPENKCKVSWCTPEGICQPKFKSEIDDNNSCTLDSCDPCTGIISHMTAPQCLSCNQCSN.

The signal sequence occupies residues 1-18 (MKLLSVLITFLLATVIYS). N-linked (GlcNAc...) asparagine glycosylation occurs at Asn-60. Residues 114-255 (TYDTTRNIYV…EDYCGVCQGD (142 aa)) form the PA14 domain. 7 N-linked (GlcNAc...) asparagine glycosylation sites follow: Asn-281, Asn-313, Asn-340, Asn-365, Asn-446, Asn-472, and Asn-521.

The protein belongs to the prespore-cell-inducing factor family.

It is found in the secreted. This is Protein psiB (psiB) from Dictyostelium discoideum (Social amoeba).